Here is an 86-residue protein sequence, read N- to C-terminus: MKNLIAELLFKLAQKEEESKELCAQVEALEIIVTAMLRNMAQNDQQRLIDQVEGALYEVKPDASIPDDDTELLRDYVKKLLKHPRQ.

A coiled-coil region spans residues 1–36 (MKNLIAELLFKLAQKEEESKELCAQVEALEIIVTAM).

Belongs to the IraP family. In terms of assembly, interacts with RssB.

The protein localises to the cytoplasm. In terms of biological role, inhibits RpoS proteolysis by regulating RssB activity, thereby increasing the stability of the sigma stress factor RpoS especially during phosphate starvation, but also in stationary phase and during nitrogen starvation. Its effect on RpoS stability is due to its interaction with RssB, which probably blocks the interaction of RssB with RpoS, and the consequent delivery of the RssB-RpoS complex to the ClpXP protein degradation pathway. The polypeptide is Anti-adapter protein IraP (Shigella sonnei (strain Ss046)).